The chain runs to 419 residues: Tyrosine--tRNA ligase (419 aa).

L-tyrosine is bound at residue Tyr34. Positions 39–48 match the 'HIGH' region motif; it reads PSGDSMHIGH. L-tyrosine contacts are provided by Tyr168 and Gln172. A 'KMSKS' region motif is present at residues 230–234; sequence KFGKS. An ATP-binding site is contributed by Lys233. One can recognise an S4 RNA-binding domain in the interval 352–418; the sequence is ANLVDWLVTL…GKKKYFLVSY (67 aa).

Belongs to the class-I aminoacyl-tRNA synthetase family. TyrS type 1 subfamily. Homodimer.

The protein localises to the cytoplasm. The catalysed reaction is tRNA(Tyr) + L-tyrosine + ATP = L-tyrosyl-tRNA(Tyr) + AMP + diphosphate + H(+). Functionally, catalyzes the attachment of tyrosine to tRNA(Tyr) in a two-step reaction: tyrosine is first activated by ATP to form Tyr-AMP and then transferred to the acceptor end of tRNA(Tyr). The sequence is that of Tyrosine--tRNA ligase from Listeria monocytogenes serotype 4b (strain F2365).